Reading from the N-terminus, the 271-residue chain is 2-aminophenol 1,6-dioxygenase alpha subunit (271 aa).

This sequence belongs to the LigB/MhpB extradiol dioxygenase family. As to quaternary structure, heterotetramer of 2 alpha and 2 beta subunits.

Component of the 2-aminophenol 1,6-dioxygenase complex that catalyzes the ring fission of 2-aminophenol to produce 2-aminomuconic 6-semialdehyde. AmnA seems to have a role in the stability of the complex. The sequence is that of 2-aminophenol 1,6-dioxygenase alpha subunit (amnA) from Pseudomonas sp.